Reading from the N-terminus, the 616-residue chain is Glycoprotein Q1 (616 aa).

An N-terminal signal peptide occupies residues 1 to 24; the sequence is MRPPRRSAPILVCAISMATALSNA. N-linked (GlcNAc...) asparagine; by host glycosylation is found at N23, N44, N282, N330, and N351.

As to quaternary structure, interacts with isoform gQ2. The heterodimer gQ1-gQ2 associates with the glycoprotein complex gH-gL to form a tetrameric complex. The gH/gL/gQ1/gQ2 complex binds to host TNFRSF4. Glycosylated by host.

The protein localises to the virion. It localises to the host endoplasmic reticulum lumen. Functionally, plays a role in virus entry by participating in host receptor binding at the cell surface. The chain is Glycoprotein Q1 from Homo sapiens (Human).